Reading from the N-terminus, the 713-residue chain is G-protein coupled receptor-associated protein LMBRD2 (713 aa).

Over 1-3 (MSG) the chain is Extracellular. The chain crosses the membrane as a helical span at residues 4-21 (VALGIEIVSVFFLALFLL). Residues 22–32 (HRYGDFKKQHK) lie on the Cytoplasmic side of the membrane. The chain crosses the membrane as a helical span at residues 33 to 53 (LVIVGTLLAWYLCFLIVFIIP). Topologically, residues 54-122 (LDVSTTIYNR…SKPWSYIPRG (69 aa)) are extracellular. Asn76 and Asn89 each carry an N-linked (GlcNAc...) asparagine glycan. A helical transmembrane segment spans residues 123-143 (IMPIFWRVVYWTSQFLTWILM). The Cytoplasmic segment spans residues 144 to 167 (PFMQSYARSGGFSITGKIKTALIE). The chain crosses the membrane as a helical span at residues 168–188 (NAIYYGTYLLIFGALLIYVAV). The Extracellular segment spans residues 189-203 (NPNLHLEWYQLQTIG). The chain crosses the membrane as a helical span at residues 204-224 (IAAANTWGLFLLVLLMGYGLV). The Cytoplasmic portion of the chain corresponds to 225 to 404 (EIPRSQWNGA…ECLLRPWCSR (180 aa)). Residues 246-314 (KAAKLMTEKA…DDYEDFEEKN (69 aa)) are a coiled coil. Residues 405 to 425 (ILAVILALFSTVVVWSECTFF) form a helical membrane-spanning segment. The Extracellular segment spans residues 426–449 (SAKPVLSLFAVFIQQAEQTHNYIY). Residues 450–470 (VEVVCFLSIFFLSICVYSTVF) traverse the membrane as a helical segment. The Cytoplasmic portion of the chain corresponds to 471-490 (RIRVFNYYYLASHHQTDAYS). The chain crosses the membrane as a helical span at residues 491 to 511 (LLFSGMLFCRLTPPLCLNFLG). The Extracellular segment spans residues 512–538 (LTHMDVSISHQNIEPTAYTSIMGSLRV). A helical transmembrane segment spans residues 539–559 (LPLIADVFYIYYPMLVLILCI). Topologically, residues 560–713 (ATYFSLGTRC…QSNSRIFDDV (154 aa)) are cytoplasmic. The stretch at 587 to 620 (DLTDEGKELIKREKRKRQRLEDGETRRREWKERY) forms a coiled coil. The tract at residues 600–713 (KRKRQRLEDG…QSNSRIFDDV (114 aa)) is disordered. The span at 605-629 (RLEDGETRRREWKERYPTNREDTSR) shows a compositional bias: basic and acidic residues. The span at 643-657 (TEMTTNRSSKYTRAS) shows a compositional bias: polar residues. The span at 658–667 (NRTERDRIEL) shows a compositional bias: basic and acidic residues. The span at 701–713 (SMSQSNSRIFDDV) shows a compositional bias: polar residues.

Belongs to the LIMR family.

The protein localises to the cell membrane. Functionally, may associate with G-protein coupled receptors and regulate downstream signaling pathways. The chain is G-protein coupled receptor-associated protein LMBRD2 (lmbrd2) from Xenopus laevis (African clawed frog).